We begin with the raw amino-acid sequence, 141 residues long: Nucleoside diphosphate kinase (141 aa).

ATP is bound by residues Lys-11, Phe-59, Arg-87, Thr-93, Arg-104, and Asn-114. His-117 acts as the Pros-phosphohistidine intermediate in catalysis.

This sequence belongs to the NDK family. As to quaternary structure, homotetramer. Mg(2+) serves as cofactor.

Its subcellular location is the cytoplasm. The catalysed reaction is a 2'-deoxyribonucleoside 5'-diphosphate + ATP = a 2'-deoxyribonucleoside 5'-triphosphate + ADP. The enzyme catalyses a ribonucleoside 5'-diphosphate + ATP = a ribonucleoside 5'-triphosphate + ADP. In terms of biological role, major role in the synthesis of nucleoside triphosphates other than ATP. The ATP gamma phosphate is transferred to the NDP beta phosphate via a ping-pong mechanism, using a phosphorylated active-site intermediate. This Herminiimonas arsenicoxydans protein is Nucleoside diphosphate kinase.